The chain runs to 93 residues: MKFFAVAALFVASAMAGPMGSEGCPGGLTGTVPLCCATNVLNIADLDCSTPTIPVPNVGIFQAHCASKGKQPVCCTLPVAGQGLLCNKPTGAQ.

The N-terminal stretch at 1-16 (MKFFAVAALFVASAMA) is a signal peptide. 4 disulfides stabilise this stretch: Cys-24–Cys-74, Cys-35–Cys-65, Cys-36–Cys-48, and Cys-75–Cys-86.

Belongs to the cerato-ulmin hydrophobin family. In terms of assembly, interacts with maize ubiquilin 1-like (UBL) protein. Homotetramer. Further self-assembles to form highly ordered films at water-air interfaces through intermolecular interactions.

It localises to the cell membrane. Functionally, aerial growth, conidiation, and dispersal of filamentous fungi in the environment rely upon a capability of their secreting small amphipathic proteins called hydrophobins (HPBs) with low sequence identity. Class I can self-assemble into an outermost layer of rodlet bundles on aerial cell surfaces, conferring cellular hydrophobicity that supports fungal growth, development and dispersal; whereas Class II form highly ordered films at water-air interfaces through intermolecular interactions but contribute nothing to the rodlet structure. Hyd1 is a class II hydrophobin that acts as an elicitor of induced systemic resistance (ISR) in plants. During interaction with the plant, binds with the maize target protein UBL in order to recruit more UBL proteins in maize roots to elicit plant defense responses, including cell death as well as brassinosteroid, jasmonate (JA) and ethylene (ET) signaling. This Trichoderma harzianum (Hypocrea lixii) protein is Class II hydrophobin 1.